Reading from the N-terminus, the 172-residue chain is ATP synthase subunit b (172 aa).

Residues 17–37 form a helical membrane-spanning segment; the sequence is IVFSAIVLAIVLPFFWWFVIP.

The protein belongs to the ATPase B chain family. F-type ATPases have 2 components, F(1) - the catalytic core - and F(0) - the membrane proton channel. F(1) has five subunits: alpha(3), beta(3), gamma(1), delta(1), epsilon(1). F(0) has three main subunits: a(1), b(2) and c(10-14). The alpha and beta chains form an alternating ring which encloses part of the gamma chain. F(1) is attached to F(0) by a central stalk formed by the gamma and epsilon chains, while a peripheral stalk is formed by the delta and b chains.

It is found in the cell membrane. In terms of biological role, f(1)F(0) ATP synthase produces ATP from ADP in the presence of a proton or sodium gradient. F-type ATPases consist of two structural domains, F(1) containing the extramembraneous catalytic core and F(0) containing the membrane proton channel, linked together by a central stalk and a peripheral stalk. During catalysis, ATP synthesis in the catalytic domain of F(1) is coupled via a rotary mechanism of the central stalk subunits to proton translocation. Its function is as follows. Component of the F(0) channel, it forms part of the peripheral stalk, linking F(1) to F(0). This is ATP synthase subunit b from Tropheryma whipplei (strain TW08/27) (Whipple's bacillus).